A 564-amino-acid polypeptide reads, in one-letter code: Isopullulanase (564 aa).

The N-terminal stretch at 1 to 19 (MRSTGYLLTLSAAFQVAQA) is a signal peptide. Residues asparagine 24, asparagine 94, asparagine 115, asparagine 138, asparagine 186, asparagine 210, asparagine 305, asparagine 381, asparagine 448, asparagine 455, asparagine 460, asparagine 486, asparagine 491, asparagine 503, and asparagine 535 are each glycosylated (N-linked (GlcNAc...) asparagine).

In terms of processing, N-glycosylated.

The protein resides in the secreted. It catalyses the reaction Hydrolysis of pullulan to isopanose (6-alpha-maltosylglucose).. Hydrolyzes pullulan, a linear polymer which is composed of maltotriose units with alpha-1,6 glucosidic linkages, to produce isopanose (Glca1-4Glca1-6Glc). The protein is Isopullulanase (ipuA) of Aspergillus niger.